The sequence spans 89 residues: MAVSKQQKHDLTVKFGGSASNTGKTEVQVAILSAEIDSLTTHMIENKKDKASKRGLYKKVAQRKKLLSYLQRVDIERYRALIKELNLRG.

It belongs to the universal ribosomal protein uS15 family. In terms of assembly, part of the 30S ribosomal subunit. Forms a bridge to the 50S subunit in the 70S ribosome, contacting the 23S rRNA.

Functionally, one of the primary rRNA binding proteins, it binds directly to 16S rRNA where it helps nucleate assembly of the platform of the 30S subunit by binding and bridging several RNA helices of the 16S rRNA. Its function is as follows. Forms an intersubunit bridge (bridge B4) with the 23S rRNA of the 50S subunit in the ribosome. The chain is Small ribosomal subunit protein uS15 from Ureaplasma parvum serovar 3 (strain ATCC 27815 / 27 / NCTC 11736).